The sequence spans 204 residues: Molybdenum cofactor guanylyltransferase (204 aa).

Residues 12 to 14, Lys25, Asn53, Asp71, and Asp101 contribute to the GTP site; that span reads LAG. Position 101 (Asp101) interacts with Mg(2+).

The protein belongs to the MobA family. In terms of assembly, monomer. Mg(2+) serves as cofactor.

The protein resides in the cytoplasm. The enzyme catalyses Mo-molybdopterin + GTP + H(+) = Mo-molybdopterin guanine dinucleotide + diphosphate. Functionally, transfers a GMP moiety from GTP to Mo-molybdopterin (Mo-MPT) cofactor (Moco or molybdenum cofactor) to form Mo-molybdopterin guanine dinucleotide (Mo-MGD) cofactor. This Ralstonia nicotianae (strain ATCC BAA-1114 / GMI1000) (Ralstonia solanacearum) protein is Molybdenum cofactor guanylyltransferase.